The sequence spans 229 residues: UPF0758 protein Mbar_A2303 (229 aa).

In terms of domain architecture, MPN spans 106-228; the sequence is KVCSPKDVYT…YVSLKDEGFV (123 aa). Residues His177, His179, and Asp190 each coordinate Zn(2+). Residues 177–190 carry the JAMM motif motif; that stretch reads HNHPSGDPSPSRED.

This sequence belongs to the UPF0758 family.

This is UPF0758 protein Mbar_A2303 from Methanosarcina barkeri (strain Fusaro / DSM 804).